Here is a 152-residue protein sequence, read N- to C-terminus: Actin-related protein 2/3 complex subunit 5-B (152 aa).

The disordered stretch occupies residues Asn-21 to Asp-44. A compositionally biased stretch (acidic residues) spans Gln-27–Val-43.

It belongs to the ARPC5 family. As to quaternary structure, component of the Arp2/3 complex composed of actr2/arp2, actr3/arp3, arpc1 (arpc1a or arpc1b), arpc2, arpc3, arpc4 and arpc5.

It is found in the cytoplasm. The protein resides in the cytoskeleton. Its subcellular location is the cell projection. It localises to the nucleus. In terms of biological role, component of the Arp2/3 complex, a multiprotein complex that mediates actin polymerization upon stimulation by nucleation-promoting factor (NPF). The Arp2/3 complex mediates the formation of branched actin networks in the cytoplasm, providing the force for cell motility. In addition to its role in the cytoplasmic cytoskeleton, the Arp2/3 complex also promotes actin polymerization in the nucleus, thereby regulating gene transcription and repair of damaged DNA. The Arp2/3 complex promotes homologous recombination (HR) repair in response to DNA damage by promoting nuclear actin polymerization, leading to drive motility of double-strand breaks (DSBs). The sequence is that of Actin-related protein 2/3 complex subunit 5-B (arpc5-b) from Xenopus laevis (African clawed frog).